The primary structure comprises 435 residues: Ribosomal protein uS12 methylthiotransferase RimO (435 aa).

An MTTase N-terminal domain is found at 3 to 113 (HKVGFVSLGC…VVNAVHQHLP (111 aa)). The [4Fe-4S] cluster site is built by Cys12, Cys48, Cys77, Cys144, Cys148, and Cys151. The Radical SAM core domain maps to 130 to 367 (LTPRHYAYLK…MQVQAEISRN (238 aa)). A TRAM domain is found at 370–435 (KNKIGSTQTV…DDYDLYASLV (66 aa)).

It belongs to the methylthiotransferase family. RimO subfamily. The cofactor is [4Fe-4S] cluster.

It is found in the cytoplasm. The catalysed reaction is L-aspartate(89)-[ribosomal protein uS12]-hydrogen + (sulfur carrier)-SH + AH2 + 2 S-adenosyl-L-methionine = 3-methylsulfanyl-L-aspartate(89)-[ribosomal protein uS12]-hydrogen + (sulfur carrier)-H + 5'-deoxyadenosine + L-methionine + A + S-adenosyl-L-homocysteine + 2 H(+). In terms of biological role, catalyzes the methylthiolation of an aspartic acid residue of ribosomal protein uS12. The protein is Ribosomal protein uS12 methylthiotransferase RimO of Legionella pneumophila (strain Lens).